The chain runs to 275 residues: Light-independent protochlorophyllide reductase iron-sulfur ATP-binding protein (275 aa).

ATP contacts are provided by residues glycine 12–threonine 17 and lysine 41. Serine 16 contributes to the Mg(2+) binding site. Cysteine 97 and cysteine 131 together coordinate [4Fe-4S] cluster. Asparagine 182–arginine 183 lines the ATP pocket.

It belongs to the NifH/BchL/ChlL family. As to quaternary structure, homodimer. Protochlorophyllide reductase is composed of three subunits; BchL, BchN and BchB. It depends on [4Fe-4S] cluster as a cofactor.

It carries out the reaction chlorophyllide a + oxidized 2[4Fe-4S]-[ferredoxin] + 2 ADP + 2 phosphate = protochlorophyllide a + reduced 2[4Fe-4S]-[ferredoxin] + 2 ATP + 2 H2O. The protein operates within porphyrin-containing compound metabolism; bacteriochlorophyll biosynthesis (light-independent). Functionally, component of the dark-operative protochlorophyllide reductase (DPOR) that uses Mg-ATP and reduced ferredoxin to reduce ring D of protochlorophyllide (Pchlide) to form chlorophyllide a (Chlide). This reaction is light-independent. The L component serves as a unique electron donor to the NB-component of the complex, and binds Mg-ATP. The sequence is that of Light-independent protochlorophyllide reductase iron-sulfur ATP-binding protein from Chlorobium limicola (strain DSM 245 / NBRC 103803 / 6330).